Here is a 59-residue protein sequence, read N- to C-terminus: Potassium channel toxin alpha-KTx 1.12 (59 aa).

Residues 1–22 (MKILSVLLLALIICSIVGWSEA) form the signal peptide. Pyrrolidone carboxylic acid is present on glutamine 23. 3 disulfides stabilise this stretch: cysteine 29-cysteine 50, cysteine 35-cysteine 55, and cysteine 39-cysteine 57. The interval 48–55 (GKCMNKKC) is interaction with Ca(2+)-activated K(+) channels.

The protein belongs to the short scorpion toxin superfamily. Potassium channel inhibitor family. Alpha-KTx 01 subfamily. Expressed by the venom gland.

Its subcellular location is the secreted. Functionally, potent selective inhibitor of high conductance (maxi-K), different medium and small conductance calcium-activated potassium channels (KCa1.1/KCNMA1 and others), as well as a voltage-dependent potassium channel (Kv1.3/KCNA3&gt;Kv1.2/KCNA2&gt;Kv1.6/KCNA3&gt;&gt;Shaker/Sh). It blocks channel activity by a simple bimolecular inhibition process. In terms of biological role, has a pH-specific antimicrobial activity against bacteria (B.subtilis, E.coli and S.aureus) and the fungus C.albicans. This Leiurus hebraeus (Hebrew deathstalker scorpion) protein is Potassium channel toxin alpha-KTx 1.12.